A 330-amino-acid polypeptide reads, in one-letter code: Aspartate--ammonia ligase (330 aa).

The protein belongs to the class-II aminoacyl-tRNA synthetase family. AsnA subfamily.

Its subcellular location is the cytoplasm. It carries out the reaction L-aspartate + NH4(+) + ATP = L-asparagine + AMP + diphosphate + H(+). It participates in amino-acid biosynthesis; L-asparagine biosynthesis; L-asparagine from L-aspartate (ammonia route): step 1/1. In Escherichia coli O17:K52:H18 (strain UMN026 / ExPEC), this protein is Aspartate--ammonia ligase.